Reading from the N-terminus, the 337-residue chain is Glycine N(alpha)-acyltransferase (337 aa).

Belongs to the acetyltransferase family.

It carries out the reaction a (3R)-hydroxyacyl-[ACP] + glycine = a lyso-glycine lipid + holo-[ACP] + H(+). The enzyme catalyses (3R)-hydroxyhexadecanoyl-[ACP] + glycine = N-[(3R)-3-hydroxyhexadecanoyl]-glycine + holo-[ACP] + H(+). It participates in lipid metabolism. In terms of biological role, is involved in the production of glycine lipids (GL), which are phosphorus-free membrane lipids important for fitness during growth of the human gut bacterium B.thetaiotaomicron in vivo and in vitro. Catalyzes the first step of GL biosynthesis, i.e. the N-acylation of glycine via addition of a 3-hydroxy fatty acyl group, to form a range of monoacylated glycine (also named lyso-glycine lipids or lyso-GL). Is important for the ability of B.thetaiotaomicron to adapt to stress and colonize the mammalian gut. Also seems to be required for the production of flavolipin, an acylated serine-glycine dipeptide. This Bacteroides thetaiotaomicron (strain ATCC 29148 / DSM 2079 / JCM 5827 / CCUG 10774 / NCTC 10582 / VPI-5482 / E50) protein is Glycine N(alpha)-acyltransferase.